The primary structure comprises 372 residues: NAD(P)H-quinone oxidoreductase subunit 1 (372 aa).

8 consecutive transmembrane segments (helical) span residues 27–47, 97–117, 128–148, 166–186, 204–224, 249–269, 308–328, and 351–371; these read AIWMPLPMILMLIGATVGVLV, WLFTLGPIIVVIPVFLSFLIV, VGMGVFLWIALSSIQPIGLLM, AAQSISYEIPLALAVLAIAMM, ILGWNIWRQPIGFLIFWIAAL, YSGMKFGLFYLGSYVNLILSS, SLGITMTVFKAYLLVFVAILL, and VGLVNLLLTAALKLAFPFAFG.

Belongs to the complex I subunit 1 family. NDH-1 is composed of at least 11 different subunits.

Its subcellular location is the cellular thylakoid membrane. It catalyses the reaction a plastoquinone + NADH + (n+1) H(+)(in) = a plastoquinol + NAD(+) + n H(+)(out). The catalysed reaction is a plastoquinone + NADPH + (n+1) H(+)(in) = a plastoquinol + NADP(+) + n H(+)(out). In terms of biological role, NDH-1 shuttles electrons from an unknown electron donor, via FMN and iron-sulfur (Fe-S) centers, to quinones in the respiratory and/or the photosynthetic chain. The immediate electron acceptor for the enzyme in this species is believed to be plastoquinone. Couples the redox reaction to proton translocation, and thus conserves the redox energy in a proton gradient. The polypeptide is NAD(P)H-quinone oxidoreductase subunit 1 (Nostoc punctiforme (strain ATCC 29133 / PCC 73102)).